The primary structure comprises 406 residues: Zinc finger protein CONSTANS-LIKE 6 (406 aa).

The Zn(2+) site is built by Cys17, Cys20, Cys40, and His45. A B box-type; atypical zinc finger spans residues 17–59; the sequence is CDSCVKRRARWYCAADDAFLCHACDGSVHSANPLARRHERVRL. The segment at 63–95 is disordered; sequence SAGKYRHASPPHQATWHQGFTRKARTPRGGKKS. Residues 82-95 are compositionally biased toward basic residues; the sequence is FTRKARTPRGGKKS. In terms of domain architecture, CCT spans 357 to 399; sequence REARVSRYREKRRTRLFSKKIRYEVRKLNAEKRPRMKGRFVKR.

The protein belongs to the CONSTANS family.

It localises to the nucleus. In Arabidopsis thaliana (Mouse-ear cress), this protein is Zinc finger protein CONSTANS-LIKE 6 (COL6).